A 113-amino-acid chain; its full sequence is DIVMTQTAPSALVTPGESVSISCRSSKSLLHSNGNTYLYWFLQRPGQCPQLLIYRMSNLASGVPDRFSGSGSGTAFTLRISRVEAEDVGVYYCMQQREYPYTFGGGTKLEIKR.

The interval 1–23 is framework-1; it reads DIVMTQTAPSALVTPGESVSISC. Cys23 and Cys93 are oxidised to a cystine. Positions 24-39 are complementarity-determining-1; the sequence is RSSKSLLHSNGNTYLY. The segment at 40–54 is framework-2; the sequence is WFLQRPGQCPQLLIY. The tract at residues 55–61 is complementarity-determining-2; it reads RMSNLAS. Residues 62–93 form a framework-3 region; sequence GVPDRFSGSGSGTAFTLRISRVEAEDVGVYYC. The complementarity-determining-3 stretch occupies residues 94-102; that stretch reads MQQREYPYT. Residues 103–112 form a framework-4 region; it reads FGGGTKLEIK.

In Mus musculus (Mouse), this protein is Ig kappa chain V-II region 7S34.1.